Reading from the N-terminus, the 124-residue chain is MKLLVVDDSSTMRRIIKNTLSRLGYEDVLEAEHGVEAWEKLDANADTKVLITDWNMPEMNGLDLVKKVRSDSRFKEIPIIMITTEGGKAEVITALKAGVNNYIVKPFTPQVLKEKLEVVLGTND.

The 119-residue stretch at 2–120 (KLLVVDDSST…VLKEKLEVVL (119 aa)) folds into the Response regulatory domain. D7, D8, D53, and N55 together coordinate Mg(2+). At D53 the chain carries 4-aspartylphosphate.

Interacts (when phosphorylated) with FliM. Requires Mg(2+) as cofactor. Post-translationally, phosphorylated by CheAY. Dephosphorylated (inactivated) by CheZ.

It is found in the cytoplasm. Chemotactic response regulator protein that modulates the rotation direction of bacterial flagellar motors. Plays an important role in the colonization and infection of Helicobacter pylori. Upon phosphorylation by CheA, interacts with the flagellar motor protein FliM to cause clockwise flagellar rotation and bacterial reversals, as opposed to straight swimming when CheY1 is not phosphorylated. This Helicobacter pylori (strain ATCC 700392 / 26695) (Campylobacter pylori) protein is Chemotaxis protein CheY1.